A 46-amino-acid chain; its full sequence is Acetylajmalan esterase (46 aa).

Asn-39 is a glycosylation site (N-linked (GlcNAc...) asparagine).

This sequence belongs to the 'GDSL' lipolytic enzyme family.

It catalyses the reaction 17-O-acetylajmaline + H2O = ajmaline + acetate + H(+). The enzyme catalyses 17-O-acetylnorajmaline + H2O = norajmaline + acetate + H(+). Its function is as follows. Deacetylates 17-O-acetylajmaline and 17-O-acetylnorajmaline, but is inactive toward other acetylated alkaloids. The sequence is that of Acetylajmalan esterase from Rauvolfia verticillata (Common devil-pepper).